The chain runs to 185 residues: Shikimate kinase (185 aa).

15–20 (GAGKST) contacts ATP. Ser19 serves as a coordination point for Mg(2+). Asp37, Arg61, and Gly83 together coordinate substrate. Position 121 (Arg121) interacts with ATP. Arg146 is a substrate binding site.

This sequence belongs to the shikimate kinase family. As to quaternary structure, monomer. The cofactor is Mg(2+).

The protein localises to the cytoplasm. It carries out the reaction shikimate + ATP = 3-phosphoshikimate + ADP + H(+). The protein operates within metabolic intermediate biosynthesis; chorismate biosynthesis; chorismate from D-erythrose 4-phosphate and phosphoenolpyruvate: step 5/7. Functionally, catalyzes the specific phosphorylation of the 3-hydroxyl group of shikimic acid using ATP as a cosubstrate. The chain is Shikimate kinase from Blochmanniella floridana.